The following is a 149-amino-acid chain: Large ribosomal subunit protein eL19 (149 aa).

Residues 45-130 form a disordered region; sequence VDEGAIQAKD…RDLYDKAGGG (86 aa). Residues 58-85 are compositionally biased toward basic residues; that stretch reads NSRGRARERQKKRAYGHQKGAGSRKGKA. Residues 90–113 show a composition bias toward basic and acidic residues; it reads NSKEDWESRIRAQRTKLRELRDEG.

It belongs to the eukaryotic ribosomal protein eL19 family. Part of the 50S ribosomal subunit.

Binds to the 23S rRNA. Located at the polypeptide exit tunnel on the outside of the subunit. This is Large ribosomal subunit protein eL19 from Haloarcula marismortui (strain ATCC 43049 / DSM 3752 / JCM 8966 / VKM B-1809) (Halobacterium marismortui).